Reading from the N-terminus, the 155-residue chain is 6,7-dimethyl-8-ribityllumazine synthase (155 aa).

5-amino-6-(D-ribitylamino)uracil contacts are provided by residues Phe-26, 60-62 (ALE), and 84-86 (AVI). (2S)-2-hydroxy-3-oxobutyl phosphate is bound at residue 89–90 (ET). His-92 serves as the catalytic Proton donor. Asn-117 contributes to the 5-amino-6-(D-ribitylamino)uracil binding site. Residue Arg-131 participates in (2S)-2-hydroxy-3-oxobutyl phosphate binding.

This sequence belongs to the DMRL synthase family.

It carries out the reaction (2S)-2-hydroxy-3-oxobutyl phosphate + 5-amino-6-(D-ribitylamino)uracil = 6,7-dimethyl-8-(1-D-ribityl)lumazine + phosphate + 2 H2O + H(+). Its pathway is cofactor biosynthesis; riboflavin biosynthesis; riboflavin from 2-hydroxy-3-oxobutyl phosphate and 5-amino-6-(D-ribitylamino)uracil: step 1/2. Functionally, catalyzes the formation of 6,7-dimethyl-8-ribityllumazine by condensation of 5-amino-6-(D-ribitylamino)uracil with 3,4-dihydroxy-2-butanone 4-phosphate. This is the penultimate step in the biosynthesis of riboflavin. The protein is 6,7-dimethyl-8-ribityllumazine synthase of Chromobacterium violaceum (strain ATCC 12472 / DSM 30191 / JCM 1249 / CCUG 213 / NBRC 12614 / NCIMB 9131 / NCTC 9757 / MK).